Reading from the N-terminus, the 399-residue chain is C-type lectin domain family 4 member M (399 aa).

Residues 1–49 (MSDSKEQRVQPLGLLEEDPTTSGIRLFPRDFQFQQTHGHKSSTGCLGHG) are Cytoplasmic-facing. An Endocytosis signal motif is present at residues 14–15 (LL). A helical; Signal-anchor for type II membrane protein membrane pass occupies residues 50–70 (PLVLQLLSFTLLAGFLVAILV). Residues 71-399 (QVYKGPSSLS…KKPTACFRDE (329 aa)) are Extracellular-facing. Asn-92 carries an N-linked (GlcNAc...) asparagine glycan. 7 repeat units span residues 108–130 (KLQE…PEKS), 131–153 (RLQE…PENS), 154–176 (RLQE…PEKS), 177–199 (KQQE…PEKS), 200–222 (KQQE…PEKS), 223–245 (KQQE…PDQS), and 246–268 (KQQQ…CCRC). Residues 108 to 269 (KLQEIYQELT…AFERLCCRCP (162 aa)) are 7 X approximate tandem repeats. 4 cysteine pairs are disulfide-bonded: Cys-265-Cys-395, Cys-268-Cys-279, Cys-296-Cys-389, and Cys-368-Cys-381. The region spanning 274-390 (FFQGNCYFIS…CNVDNYWICK (117 aa)) is the C-type lectin domain. Ca(2+) contacts are provided by Glu-359, Asn-361, Ser-363, Glu-366, Asn-377, and Asp-378. N-linked (GlcNAc...) asparagine glycosylation occurs at Asn-361.

As to quaternary structure, homotetramer.

Its subcellular location is the membrane. Probable pathogen-recognition receptor involved in peripheral immune surveillance in liver. May mediate the endocytosis of pathogens which are subsequently degraded in lysosomal compartments. Probably recognizes in a calcium-dependent manner high mannose N-linked oligosaccharides in a variety of pathogen antigens. Is a receptor for ICAM3, probably by binding to mannose-like carbohydrates. This is C-type lectin domain family 4 member M (CLEC4M) from Nomascus concolor (Black crested gibbon).